Reading from the N-terminus, the 240-residue chain is LexA repressor (240 aa).

The segment at residues 26 to 46 is a DNA-binding region (H-T-H motif); that stretch reads FDEMKEALDLASKSGIHRLIT. Active-site for autocatalytic cleavage activity residues include Ser161 and Lys199.

Belongs to the peptidase S24 family. As to quaternary structure, homodimer.

It carries out the reaction Hydrolysis of Ala-|-Gly bond in repressor LexA.. Its function is as follows. Represses a number of genes involved in the response to DNA damage (SOS response), including recA and lexA. In the presence of single-stranded DNA, RecA interacts with LexA causing an autocatalytic cleavage which disrupts the DNA-binding part of LexA, leading to derepression of the SOS regulon and eventually DNA repair. This chain is LexA repressor, found in Brucella ovis (strain ATCC 25840 / 63/290 / NCTC 10512).